The sequence spans 185 residues: Ribosome-recycling factor (185 aa).

Belongs to the RRF family.

It is found in the cytoplasm. Responsible for the release of ribosomes from messenger RNA at the termination of protein biosynthesis. May increase the efficiency of translation by recycling ribosomes from one round of translation to another. This Corynebacterium efficiens (strain DSM 44549 / YS-314 / AJ 12310 / JCM 11189 / NBRC 100395) protein is Ribosome-recycling factor.